Here is a 329-residue protein sequence, read N- to C-terminus: Major outer membrane protein P.IB (329 aa).

Positions 1-19 (MKKSLIALTLAALPVAAMA) are cleaved as a signal peptide.

It belongs to the Gram-negative porin family. In terms of assembly, homotrimer.

It is found in the cell outer membrane. In terms of biological role, serves as a slightly cation selective porin. This chain is Major outer membrane protein P.IB (porB), found in Neisseria meningitidis serogroup A / serotype 4A (strain DSM 15465 / Z2491).